The primary structure comprises 293 residues: Elongation factor Ts (293 aa).

The tract at residues 80 to 83 is involved in Mg(2+) ion dislocation from EF-Tu; sequence TDFV.

This sequence belongs to the EF-Ts family.

Its subcellular location is the cytoplasm. Its function is as follows. Associates with the EF-Tu.GDP complex and induces the exchange of GDP to GTP. It remains bound to the aminoacyl-tRNA.EF-Tu.GTP complex up to the GTP hydrolysis stage on the ribosome. This Paraburkholderia phytofirmans (strain DSM 17436 / LMG 22146 / PsJN) (Burkholderia phytofirmans) protein is Elongation factor Ts.